The chain runs to 215 residues: UPF0502 protein YceH (215 aa).

It belongs to the UPF0502 family.

This is UPF0502 protein YceH from Salmonella paratyphi B (strain ATCC BAA-1250 / SPB7).